Here is a 450-residue protein sequence, read N- to C-terminus: Vimentin beta (450 aa).

A head region spans residues 1 to 81 (MSSRTSTSSY…FGLADAINTE (81 aa)). Residues 24-38 (STYSSRQYSSPGRTT) are compositionally biased toward polar residues. The segment at 24–56 (STYSSRQYSSPGRTTSRVSYSSASSTSPSLYMS) is disordered. The segment covering 39 to 56 (SRVSYSSASSTSPSLYMS) has biased composition (low complexity). Residues 82–117 (FKANRTNEKAEMQHVNDRFASYIEEVRFLEQQNKIL) form a coil 1A region. An IF rod domain is found at 89–397 (EKAEMQHVND…NLLEGEEYRI (309 aa)). Positions 118–139 (TAELEQMRGKGSSRVGDLYEDE) are linker 1. The tract at residues 140-231 (MRELRRQVDQ…KLHDEELAEL (92 aa)) is coil 1B. A linker 12 region spans residues 232 to 254 (QMQIQERHVQIDMEVAKPDLTAA). The segment at 255 to 393 (LRDVRQQYET…ATYRNLLEGE (139 aa)) is coil 2. Positions 394 to 450 (EYRITTPFPNLSSLSLRESMKEIRPAMDSLSKKVVIKTIETRDGHIINQSTQKDNLE) are tail.

Belongs to the intermediate filament family. As to quaternary structure, homomer. In terms of processing, one of the most prominent phosphoproteins in various cells of mesenchymal origin. Phosphorylation is enhanced during cell division, at which time vimentin filaments are significantly reorganized. Expressed in low amounts in retina, optic nerve, brain, and spinal cord and in very high amounts in eye lens.

Its function is as follows. Vimentins are class-III intermediate filaments found in various non-epithelial cells, especially mesenchymal cells. Vimentin is attached to the nucleus, endoplasmic reticulum, and mitochondria, either laterally or terminally. This Carassius auratus (Goldfish) protein is Vimentin beta.